Reading from the N-terminus, the 200-residue chain is MSSLIPIVIEQTSRGERSYDIYSRLLKDRIIFLGTSIDDQVANAVTAQLLFLESDDPDKEINMYINSSGGITSAGLAIYDTMQHIKPKVNTYAIGMAASMAAVLLAGGTGTRYALPHARILIHQPWVKGGIGGQVTDIEITAKELLHTKEKLAEIIAKHTGQPLEKVKEDSERDRWMSAEEAKAYGLVDVVVQPRERKKA.

Ser-99 functions as the Nucleophile in the catalytic mechanism. The active site involves His-123.

This sequence belongs to the peptidase S14 family. In terms of assembly, fourteen ClpP subunits assemble into 2 heptameric rings which stack back to back to give a disk-like structure with a central cavity, resembling the structure of eukaryotic proteasomes.

It is found in the cytoplasm. The enzyme catalyses Hydrolysis of proteins to small peptides in the presence of ATP and magnesium. alpha-casein is the usual test substrate. In the absence of ATP, only oligopeptides shorter than five residues are hydrolyzed (such as succinyl-Leu-Tyr-|-NHMec, and Leu-Tyr-Leu-|-Tyr-Trp, in which cleavage of the -Tyr-|-Leu- and -Tyr-|-Trp bonds also occurs).. Cleaves peptides in various proteins in a process that requires ATP hydrolysis. Has a chymotrypsin-like activity. Plays a major role in the degradation of misfolded proteins. The polypeptide is ATP-dependent Clp protease proteolytic subunit 2 (Symbiobacterium thermophilum (strain DSM 24528 / JCM 14929 / IAM 14863 / T)).